Consider the following 605-residue polypeptide: Terpenoid synthase 18 (605 aa).

Mg(2+) contacts are provided by D356, D360, N500, T504, and E508. The DDXXD motif signature appears at 356–360; sequence DDTYD.

The protein belongs to the terpene synthase family. Tpsa subfamily. It depends on Mg(2+) as a cofactor. The cofactor is Mn(2+). As to expression, predominantly expressed in flowers and siliques but also in roots and leaves.

The protein localises to the cytoplasm. Its pathway is secondary metabolite biosynthesis; terpenoid biosynthesis. The chain is Terpenoid synthase 18 (TPS18) from Arabidopsis thaliana (Mouse-ear cress).